Here is a 371-residue protein sequence, read N- to C-terminus: Barbiturase 2 (371 aa).

The interval 1-104 (MTRPIEVRKV…TIFAYAPEGR (104 aa)) is RU A. Residues arginine 53 and 83–84 (SG) each bind substrate. Residues 112–247 (RVTVGYAMSE…AQIVVVGNAR (136 aa)) are RU B. The active site involves lysine 162. Residues asparagine 194 and 230–231 (SS) each bind substrate. Residue serine 230 is the Nucleophile of the active site. Residues 253-371 (FRVGHSIMKD…PVIAIVDLEA (119 aa)) form an RU C region. Glutamate 303 contacts Mg(2+). Substrate contacts are provided by residues lysine 330 and 349–350 (SV). Alanine 352, glutamine 355, glycine 356, proline 357, and glycine 360 together coordinate Mg(2+).

Belongs to the cyclic amide hydrolase (CyAH) family. As to quaternary structure, homotetramer.

It carries out the reaction barbiturate + H2O = 3-oxo-3-ureidopropanoate. Its pathway is pyrimidine metabolism; uracil degradation via oxidative pathway; malonate and urea from uracil: step 2/3. Functionally, responsible for the hydrolysis of barbituric acid (2,4,6-trihydroxy-1,3-pyrimidine), an intermediate in the oxidative catabolism of pyrimidines. Catalyzes the hydrolytic opening of the pyrimidine ring of barbituric acid to yield ureidomalonic acid. Can also use cyanuric acid as a substrate, albeit with lower efficiency. This is Barbiturase 2 from Nocardioides sp. (strain ATCC BAA-499 / JS614).